The sequence spans 126 residues: Small ribosomal subunit protein uS13 (126 aa).

The disordered stretch occupies residues P98 to K126. Residues A108 to K126 are compositionally biased toward basic residues.

Belongs to the universal ribosomal protein uS13 family. Part of the 30S ribosomal subunit. Forms a loose heterodimer with protein S19. Forms two bridges to the 50S subunit in the 70S ribosome.

Located at the top of the head of the 30S subunit, it contacts several helices of the 16S rRNA. In the 70S ribosome it contacts the 23S rRNA (bridge B1a) and protein L5 of the 50S subunit (bridge B1b), connecting the 2 subunits; these bridges are implicated in subunit movement. Contacts the tRNAs in the A and P-sites. The polypeptide is Small ribosomal subunit protein uS13 (Parabacteroides distasonis (strain ATCC 8503 / DSM 20701 / CIP 104284 / JCM 5825 / NCTC 11152)).